A 263-amino-acid polypeptide reads, in one-letter code: Endonuclease 8 (263 aa).

P2 serves as the catalytic Schiff-base intermediate with DNA. Catalysis depends on E3, which acts as the Proton donor. K53 acts as the Proton donor; for beta-elimination activity in catalysis. Positions 70, 125, and 169 each coordinate DNA. The segment at 229–263 (KVFHRDGERCERCGGIIEKTTLSSRPFYWCPGCQH) adopts an FPG-type zinc-finger fold. The Proton donor; for delta-elimination activity role is filled by R253.

This sequence belongs to the FPG family. It depends on Zn(2+) as a cofactor.

The enzyme catalyses 2'-deoxyribonucleotide-(2'-deoxyribose 5'-phosphate)-2'-deoxyribonucleotide-DNA = a 3'-end 2'-deoxyribonucleotide-(2,3-dehydro-2,3-deoxyribose 5'-phosphate)-DNA + a 5'-end 5'-phospho-2'-deoxyribonucleoside-DNA + H(+). Functionally, involved in base excision repair of DNA damaged by oxidation or by mutagenic agents. Acts as a DNA glycosylase that recognizes and removes damaged bases. Has a preference for oxidized pyrimidines, such as thymine glycol, 5,6-dihydrouracil and 5,6-dihydrothymine. Has AP (apurinic/apyrimidinic) lyase activity and introduces nicks in the DNA strand. Cleaves the DNA backbone by beta-delta elimination to generate a single-strand break at the site of the removed base with both 3'- and 5'-phosphates. The polypeptide is Endonuclease 8 (Klebsiella pneumoniae subsp. pneumoniae (strain ATCC 700721 / MGH 78578)).